Consider the following 674-residue polypeptide: Polyunsaturated fatty acid 5-lipoxygenase (674 aa).

Positions 2-118 (PSYTVTVATG…EIVLRDGRAK (117 aa)) constitute a PLAT domain. The Ca(2+) site is built by Gly17, Thr18, Asp19, Asn44, Asp45, Glu47, Asp79, and Asp80. Positions 119–674 (LARDDQIHIL…PDRIPNSVAI (556 aa)) constitute a Lipoxygenase domain. Ser272 bears the Phosphoserine mark. Fe cation-binding residues include His368 and His373. The residue at position 524 (Ser524) is a Phosphoserine. Residues His551, Asn555, and Ile674 each coordinate Fe cation.

This sequence belongs to the lipoxygenase family. As to quaternary structure, homodimer. Interacts with ALOX5AP and LTC4S. Interacts with COTL1, the interaction is required for stability and efficient catalytic activity. Interacts with PIK3R1; this interaction bridges ALOX5 with CD40 after CD40 ligation in B cells and leads to the production of reactive oxygen species (ROS). Interacts (via PLAT domain) with DICER1 (via Dicer dsRNA-binding fold domain); this interaction enhances arachidonate 5-lipoxygenase activity and modifies the miRNA precursor processing activity of DICER1. Fe cation serves as cofactor. Post-translationally, serine phosphorylation by MAPKAPK2 is stimulated by arachidonic acid. Phosphorylation on Ser-524 by PKA has an inhibitory effect. Phosphorylation on Ser-272 prevents export from the nucleus. Phosphorylation at Ser-524 is stimulated by 8-bromo-3',5'-cyclic AMP or prostaglandin E2. Expressed in skin Langerhans cells and their emigrated counterparts in draining lymph nodes. Highly expressed in circulating leukocytes.

It localises to the cytoplasm. The protein resides in the nucleus matrix. Its subcellular location is the nucleus membrane. The protein localises to the perinuclear region. It is found in the cytosol. It localises to the nucleus envelope. The protein resides in the nucleus intermembrane space. The catalysed reaction is (5Z,8Z,11Z,14Z)-eicosatetraenoate + O2 = (5S)-hydroperoxy-(6E,8Z,11Z,14Z)-eicosatetraenoate. The enzyme catalyses (5Z,8Z,11Z,14Z)-eicosatetraenoate + O2 = leukotriene A4 + H2O. It carries out the reaction (5Z,8Z,11Z,14Z)-eicosatetraenoate + O2 = (8S)-hydroperoxy-(5Z,9E,11Z,14Z)-eicosatetraenoate. It catalyses the reaction (5Z,8Z,11Z,14Z)-eicosatetraenoate + O2 = (12S)-hydroperoxy-(5Z,8Z,10E,14Z)-eicosatetraenoate. The catalysed reaction is 18-HEPE + O2 = (5S)-hydroperoxy-18-hydroxy-(7E,9E,11Z,14Z,16E)-eicosapentaenoate. The enzyme catalyses (18R)-hydroxy-(5Z,8Z,11Z,14Z,16E)-eicosapentaenoate + O2 = (5S)-hydroperoxy-(18R)-hydroxy-(6E,8Z,11Z,14Z,16E)-eicosapentaenoate. It carries out the reaction (18S)-hydroxy-(5Z,8Z,11Z,14Z,16E)-eicosapentaenoate + O2 = (5S)-hydroperoxy-(18S)-hydroxy-(6E,8Z,11Z,14Z,16E)-eicosapentaenoate. It catalyses the reaction (5S)-hydroperoxy-(18S)-hydroxy-(6E,8Z,11Z,14Z,16E)-eicosapentaenoate = (5S,6S)-epoxy-(18S)-hydroxy-(7E,9E,11Z,14Z,16E)-eicosapentaenoate + H2O. The catalysed reaction is (5S)-hydroperoxy-(18R)-hydroxy-(6E,8Z,11Z,14Z,16E)-eicosapentaenoate = (5S,6S)-epoxy-(18R)-hydroxy-(7E,9E,11Z,14Z,16E)-eicosapentaenoate + H2O. The enzyme catalyses (5S)-hydroperoxy-18-hydroxy-(7E,9E,11Z,14Z,16E)-eicosapentaenoate = (5S,6S)-epoxy-18-hydroxy-(7E,9E,11Z,14Z,16E)-eicosapentaenoate + H2O. It carries out the reaction (15S)-hydroxy-(5Z,8Z,11Z,13E)-eicosatetraenoate + O2 = (5S)-hydroperoxy-(15S)-hydroxy-(6E,8Z,11Z,13E)-eicosatetraenoate. It catalyses the reaction (5S)-hydroperoxy-(6E,8Z,11Z,14Z)-eicosatetraenoate = leukotriene A4 + H2O. The catalysed reaction is (5Z,8Z)-eicosadienoate + O2 = (5S)-hydroperoxy-(6E,8Z)-eicosadienoate. The enzyme catalyses (12S)-hydroxy-(5Z,8Z,10E,14Z)-eicosatetraenoate + O2 = (5S)-hydroperoxy-(12S)-hydroxy-(6E,8Z,10E,14Z)-eicosatetraenoate. It carries out the reaction (5Z,8Z,11Z,14Z,17Z)-eicosapentaenoate + O2 = 5-hydroperoxy-(6E,8Z,11Z,14Z,17Z)-eicosapentaenoate. It catalyses the reaction (4Z,7Z,10Z,13Z,16Z,19Z)-docosahexaenoate + O2 = (14S)-hydroperoxy-(4Z,7Z,10Z,12E,16Z,19Z)-docosahexaenoate. The catalysed reaction is (4Z,7Z,10Z,13Z,16Z,19Z)-docosahexaenoate + O2 = (7S)-hydroperoxy-(4Z,8E,10Z,13Z,16Z,19Z)-docosahexaenoate. The enzyme catalyses (4Z,7Z,10Z,13Z,16Z,19Z)-docosahexaenoate + O2 = (17S)-hydroperoxy-(4Z,7Z,10Z,13Z,15E,19Z)-docosahexaenoate. Its pathway is lipid metabolism; leukotriene A4 biosynthesis. In terms of biological role, catalyzes the oxygenation of arachidonate to 5-hydroperoxyeicosatetraenoate (5-HPETE) followed by the dehydration to 5,6- epoxyeicosatetraenoate (Leukotriene A4/LTA4), the first two steps in the biosynthesis of leukotrienes, which are potent mediators of inflammation. Also catalyzes the oxygenation of arachidonic acid into 8-hydroperoxyicosatetraenoic acid (8-HPETE) and 12-hydroperoxyicosatetraenoic acid (12-HPETE). Displays lipoxin synthase activity being able to convert (15S)-HETE into a conjugate tetraene. Although arachidonate is the preferred substrate, this enzyme can also metabolize oxidized fatty acids derived from arachidonate such as (15S)-HETE, eicosapentaenoate (EPA) such as (18R)- and (18S)-HEPE or docosahexaenoate (DHA) which lead to the formation of specialized pro-resolving mediators (SPM) lipoxin and resolvins E and D respectively, therefore it participates in anti-inflammatory responses. Oxidation of DHA directly inhibits endothelial cell proliferation and sprouting angiogenesis via peroxisome proliferator-activated receptor gamma (PPARgamma). It does not catalyze the oxygenation of linoleic acid and does not convert (5S)-HETE to lipoxin isomers. In addition to inflammatory processes, participates in dendritic cell migration, wound healing through an antioxidant mechanism based on heme oxygenase-1 (HO-1) regulation expression, monocyte adhesion to the endothelium via ITGAM expression on monocytes. Moreover, it helps establish an adaptive humoral immunity by regulating primary resting B cells and follicular helper T cells and participates in the CD40-induced production of reactive oxygen species (ROS) after CD40 ligation in B cells through interaction with PIK3R1 that bridges ALOX5 with CD40. May also play a role in glucose homeostasis, regulation of insulin secretion and palmitic acid-induced insulin resistance via AMPK. Can regulate bone mineralization and fat cell differentiation increases in induced pluripotent stem cells. The sequence is that of Polyunsaturated fatty acid 5-lipoxygenase from Mus musculus (Mouse).